A 535-amino-acid chain; its full sequence is MFSPRKIPMNVRGISMANGPVLVVDFGAQYAQLIARRVREAGVYSELVPHSMPVDEILAKDPKAIILSGGPASVFEPGAPTIDTKVFESGVPVLGICYGFQVMAYELGGKVDKAALGEYGKTSATIDDAAGILADSPAEQTTWMSHGVAVEQAPAGFEVLAHTEGAPVAAMADESRKLYGVQWHPEVKHSPLGQKLIENFLHRCAALPNDWDASSIIEDQVKKIREQVGDAEVICGLSGGVDSAVAAALVHKAIGDQLTCVFVDHGLLRKGEVEQVKHDFVAATGIRLITVDAADDFLDALAGVSEPERKRKIIGEKFIRTFEKAQRQVLEEAGARGKEVKFLVQGTLYPDVVESGGGDGAANIKSHHNVGGLPKDIKFQLIEPLRTLFKDEVRAIGTELGLPDEIVWRQPFPGPGLGIRIIGEITKERLDLLREADAIAREELSKAGLDRDIWQCPVVLLADVHSVGVQGDERTYGSPIVLRPVSSEDAMTADWSRVPYDVLATISTRITNECRQINRVVLDCTSKPPATIEWE.

The 191-residue stretch at 20–210 folds into the Glutamine amidotransferase type-1 domain; that stretch reads PVLVVDFGAQ…LHRCAALPND (191 aa). Cys-97 acts as the Nucleophile in catalysis. Catalysis depends on residues His-184 and Glu-186. The region spanning 211 to 409 is the GMPS ATP-PPase domain; sequence WDASSIIEDQ…LGLPDEIVWR (199 aa). Residue 238-244 coordinates ATP; the sequence is SGGVDSA.

As to quaternary structure, homodimer.

The enzyme catalyses XMP + L-glutamine + ATP + H2O = GMP + L-glutamate + AMP + diphosphate + 2 H(+). It participates in purine metabolism; GMP biosynthesis; GMP from XMP (L-Gln route): step 1/1. Its function is as follows. Catalyzes the synthesis of GMP from XMP. This chain is GMP synthase [glutamine-hydrolyzing], found in Bifidobacterium longum (strain NCC 2705).